A 1420-amino-acid polypeptide reads, in one-letter code: tRNA (32-2'-O)-methyltransferase regulator TRM732 (1420 aa).

The tract at residues 748-754 (RRSGGLP) is required for activity.

The protein belongs to the THADA family. In terms of assembly, interacts with TRM7; for 2'-O-methylation of position 32 in substrate tRNAs.

The protein localises to the cytoplasm. Functionally, together with methyltransferase TRM7, methylates the 2'-O-ribose of nucleotides at position 32 of the anticodon loop of substrate tRNAs. In Saccharomyces cerevisiae (strain ATCC 204508 / S288c) (Baker's yeast), this protein is tRNA (32-2'-O)-methyltransferase regulator TRM732 (TRM732).